A 142-amino-acid polypeptide reads, in one-letter code: Cell division protein SepF (142 aa).

A compositionally biased stretch (acidic residues) spans 21-31 (ETTTVEEEREE). The disordered stretch occupies residues 21 to 46 (ETTTVEEEREEQESSHKRQPAISRTN).

This sequence belongs to the SepF family. As to quaternary structure, homodimer. Interacts with FtsZ.

It is found in the cytoplasm. Cell division protein that is part of the divisome complex and is recruited early to the Z-ring. Probably stimulates Z-ring formation, perhaps through the cross-linking of FtsZ protofilaments. Its function overlaps with FtsA. This chain is Cell division protein SepF, found in Brevibacillus brevis (strain 47 / JCM 6285 / NBRC 100599).